Reading from the N-terminus, the 294-residue chain is 33 kDa chaperonin (294 aa).

Intrachain disulfides connect Cys-238–Cys-240 and Cys-271–Cys-274.

Belongs to the HSP33 family. In terms of processing, under oxidizing conditions two disulfide bonds are formed involving the reactive cysteines. Under reducing conditions zinc is bound to the reactive cysteines and the protein is inactive.

It localises to the cytoplasm. In terms of biological role, redox regulated molecular chaperone. Protects both thermally unfolding and oxidatively damaged proteins from irreversible aggregation. Plays an important role in the bacterial defense system toward oxidative stress. The protein is 33 kDa chaperonin of Thermoanaerobacter pseudethanolicus (strain ATCC 33223 / 39E) (Clostridium thermohydrosulfuricum).